The chain runs to 84 residues: Large ribosomal subunit protein bL31B (84 aa).

It belongs to the bacterial ribosomal protein bL31 family. Type B subfamily. Part of the 50S ribosomal subunit.

Binds the 23S rRNA. The sequence is that of Large ribosomal subunit protein bL31B from Rhodococcus jostii (strain RHA1).